We begin with the raw amino-acid sequence, 490 residues long: 5-hydroxytryptamine receptor 3A (490 aa).

Positions 1-19 are cleaved as a signal peptide; the sequence is MVLWLQLALLALLLPTSLA. Residues 20-249 lie on the Extracellular side of the membrane; it reads QGEVRGKGTA…FYVVIRRRPL (230 aa). Residues asparagine 33, asparagine 109, asparagine 175, and asparagine 191 are each glycosylated (N-linked (GlcNAc...) asparagine). A disulfide bridge links cysteine 162 with cysteine 176. Residues 250 to 270 traverse the membrane as a helical segment; the sequence is FYAVTLLLPSIFLMIVDIVGF. Residues 271-285 lie on the Cytoplasmic side of the membrane; sequence YLPPDSGERVSFKIT. A helical transmembrane segment spans residues 286-306; sequence LLLGYSVFLIIVSDTLPATAI. Residues 307–312 lie on the Extracellular side of the membrane; sequence GTPLIS. The chain crosses the membrane as a helical span at residues 313-333; that stretch reads VYFVVCMALLVISLAETILIV. Residues 334–467 lie on the Cytoplasmic side of the membrane; that stretch reads RLVHKQDLQQ…GSVLDKLLFR (134 aa). The tract at residues 401-422 is disordered; the sequence is GGPQDLEKTSRGRGSPPPPPRE. The tract at residues 426-462 is HA-stretch; determines single-channel conductance in 5-HT3 receptors; the sequence is AMCGLLQELASIRHFLEKREETREVARDWLRVGSVLD. A helical transmembrane segment spans residues 468–488; the sequence is VYLLAVLAYSITLVTLWSVWH. Residues 489–490 are Extracellular-facing; it reads YA.

It belongs to the ligand-gated ion channel (TC 1.A.9) family. 5-hydroxytryptamine receptor (TC 1.A.9.2) subfamily. HTR3A sub-subfamily. As to quaternary structure, forms homopentameric as well as heteropentameric serotonin-activated cation-selective channel complexes with HTR3B or HTR3C or HTR3D or HTR3E. The homomeric complex is functional but exhibits low conductance with modified voltage dependence, and decreased agonist and antagonist affinity. Heteropentameric complexes display properties which resemble that of neuronal serotonin-activated channels in vivo. Interacts with RIC3. As to expression, expressed in cortex, intestine and liver. Not expressed in muscle or spleen.

Its subcellular location is the postsynaptic cell membrane. It is found in the cell membrane. The enzyme catalyses Na(+)(in) = Na(+)(out). The catalysed reaction is K(+)(in) = K(+)(out). It catalyses the reaction Ca(2+)(in) = Ca(2+)(out). It carries out the reaction Mg(2+)(in) = Mg(2+)(out). Its function is as follows. Forms serotonin (5-hydroxytryptamine/5-HT3)-activated cation-selective channel complexes, which when activated cause fast, depolarizing responses in neurons. This is 5-hydroxytryptamine receptor 3A from Cavia porcellus (Guinea pig).